The sequence spans 219 residues: Protein-L-isoaspartate O-methyltransferase (219 aa).

Ser-64 is an active-site residue.

This sequence belongs to the methyltransferase superfamily. L-isoaspartyl/D-aspartyl protein methyltransferase family.

The protein localises to the cytoplasm. The enzyme catalyses [protein]-L-isoaspartate + S-adenosyl-L-methionine = [protein]-L-isoaspartate alpha-methyl ester + S-adenosyl-L-homocysteine. Catalyzes the methyl esterification of L-isoaspartyl residues in peptides and proteins that result from spontaneous decomposition of normal L-aspartyl and L-asparaginyl residues. It plays a role in the repair and/or degradation of damaged proteins. In Chlorobaculum parvum (strain DSM 263 / NCIMB 8327) (Chlorobium vibrioforme subsp. thiosulfatophilum), this protein is Protein-L-isoaspartate O-methyltransferase.